A 200-amino-acid chain; its full sequence is Shikimate kinase (200 aa).

ATP is bound at residue 41–46 (GVGKSS). Ser-45 is a binding site for Mg(2+). Substrate contacts are provided by Asp-63, Arg-87, and Gly-109. Arg-147 provides a ligand contact to ATP. A substrate-binding site is contributed by Arg-166.

It belongs to the shikimate kinase family. Monomer. It depends on Mg(2+) as a cofactor.

It localises to the cytoplasm. The catalysed reaction is shikimate + ATP = 3-phosphoshikimate + ADP + H(+). Its pathway is metabolic intermediate biosynthesis; chorismate biosynthesis; chorismate from D-erythrose 4-phosphate and phosphoenolpyruvate: step 5/7. In terms of biological role, catalyzes the specific phosphorylation of the 3-hydroxyl group of shikimic acid using ATP as a cosubstrate. This Caulobacter vibrioides (strain NA1000 / CB15N) (Caulobacter crescentus) protein is Shikimate kinase.